The following is an 81-amino-acid chain: MSRSRASGRPRSRRRECEFTKLGIVPDYKDVKRLQKYLTAQGKILPRRRTGVSAKMQRRLAVAIKRARHLALLPVAPSHTR.

This sequence belongs to the bacterial ribosomal protein bS18 family. As to quaternary structure, part of the 30S ribosomal subunit. Forms a tight heterodimer with protein bS6.

Functionally, binds as a heterodimer with protein bS6 to the central domain of the 16S rRNA, where it helps stabilize the platform of the 30S subunit. The protein is Small ribosomal subunit protein bS18 of Chloroflexus aurantiacus (strain ATCC 29366 / DSM 635 / J-10-fl).